We begin with the raw amino-acid sequence, 458 residues long: MKKKYFGTDGIRGKVGDFPITPDFFLRLGYAVGKVLLASDRQLAADKRPTVLIGKDTRISGYMLESALEAGFSAAGVDVLLSGPLPTPAVAYLVRALRIQAGAVISASHNPFDDNGIKFFSSAGSKLPDSMELQIEAELDQPMKTTPSIKLGRVQRLRDAAGRYIEFCKSTFPNQLDLRGLRIVVDCANGADYHIAGHVMHELGADVITTHASPDGFNINYECGATHIETLQGSILQHKADIGIAVDGDGDRVLMVSREGVLYDGDSLAYIIAKHRQQLGELQGGVAGTLMTNLAVEQAFERLGIPFARANVGDRYVSELLQQNDWYLGAENSGHIICRDKHTTGDGIISALQVLYALRDTGLTLADFMRDVPFFPQRLINVKVSGNFDFRSNPAVAACKNEAEQALGNDGRILLRASGTEPLIRVMVEGKVLQQTDYWAEKIAETIRQQAASSMTGS.

Ser108 functions as the Phosphoserine intermediate in the catalytic mechanism. Ser108, Asp247, Asp249, and Asp251 together coordinate Mg(2+). Ser108 carries the post-translational modification Phosphoserine.

It belongs to the phosphohexose mutase family. It depends on Mg(2+) as a cofactor. Activated by phosphorylation.

The catalysed reaction is alpha-D-glucosamine 1-phosphate = D-glucosamine 6-phosphate. Catalyzes the conversion of glucosamine-6-phosphate to glucosamine-1-phosphate. The chain is Phosphoglucosamine mutase from Nitrosomonas europaea (strain ATCC 19718 / CIP 103999 / KCTC 2705 / NBRC 14298).